Reading from the N-terminus, the 327-residue chain is L-lactate dehydrogenase (327 aa).

Residues V18, D39, R44, Y69, and 83 to 84 (GL) each bind NAD(+). Substrate contacts are provided by residues Q86, R92, and 124–127 (NPVD). Residues 122-124 (AAN) and S147 each bind NAD(+). 152–155 (DSAR) serves as a coordination point for substrate. Beta-D-fructose 1,6-bisphosphate is bound by residues R157 and H172. Residue H179 is the Proton acceptor of the active site. A Phosphotyrosine modification is found at Y224. T233 serves as a coordination point for substrate.

This sequence belongs to the LDH/MDH superfamily. LDH family. In terms of assembly, homotetramer.

It localises to the cytoplasm. It catalyses the reaction (S)-lactate + NAD(+) = pyruvate + NADH + H(+). The protein operates within fermentation; pyruvate fermentation to lactate; (S)-lactate from pyruvate: step 1/1. Allosterically activated by fructose 1,6-bisphosphate (FBP). Catalyzes the conversion of lactate to pyruvate. The chain is L-lactate dehydrogenase from Streptococcus suis (strain 98HAH33).